The chain runs to 723 residues: Protein Hook homolog (723 aa).

Residues 4-120 form the Calponin-homology (CH) domain; that stretch reads TELCECLVQW…RLLQLILGCA (117 aa). 2 coiled-coil regions span residues 162-423 and 457-665; these read VLPE…MQLQ and EIKE…IVSA. The disordered stretch occupies residues 682-723; it reads LANGGPMQGGQSFLARQRQATSRRTTVSTTHPGHARSVNFVN. Over residues 696–711 the composition is skewed to low complexity; the sequence is ARQRQATSRRTTVSTT.

The protein belongs to the hook family. As to quaternary structure, interacts with microtubules.

Its subcellular location is the cytoplasm. The protein resides in the cytoskeleton. In terms of biological role, may function to promote vesicle trafficking and/or fusion. May act to link a number of membrane-bound organelles to the cytoskeleton. The polypeptide is Protein Hook homolog (Branchiostoma floridae (Florida lancelet)).